The chain runs to 108 residues: Thioredoxin Asp f 28 (108 aa).

The Thioredoxin domain occupies 1-108 (MSHGKVIAVD…LEEMIKSISA (108 aa)). Active-site nucleophile residues include Cys-33 and Cys-36. Residues Cys-33 and Cys-36 are joined by a disulfide bond.

The protein belongs to the thioredoxin family.

In terms of biological role, participates in various redox reactions through the reversible oxidation of its active center dithiol to a disulfide and catalyzes dithiol-disulfide exchange reactions. The protein is Thioredoxin Asp f 28 of Aspergillus fumigatus (Neosartorya fumigata).